The chain runs to 505 residues: Cysteine--tRNA ligase (505 aa).

Zn(2+) is bound at residue cysteine 33. Positions 35–45 (PTVYDFAHIGN) match the 'HIGH' region motif. 3 residues coordinate Zn(2+): cysteine 229, histidine 268, and glutamate 272. The 'KMSKS' region signature appears at 301 to 305 (KMSKS). Residue lysine 304 participates in ATP binding.

It belongs to the class-I aminoacyl-tRNA synthetase family. As to quaternary structure, monomer. Requires Zn(2+) as cofactor.

It localises to the cytoplasm. It catalyses the reaction tRNA(Cys) + L-cysteine + ATP = L-cysteinyl-tRNA(Cys) + AMP + diphosphate. This is Cysteine--tRNA ligase from Brucella anthropi (strain ATCC 49188 / DSM 6882 / CCUG 24695 / JCM 21032 / LMG 3331 / NBRC 15819 / NCTC 12168 / Alc 37) (Ochrobactrum anthropi).